The sequence spans 214 residues: A-type ATP synthase subunit D (214 aa).

It belongs to the V-ATPase D subunit family. Has multiple subunits with at least A(3), B(3), C, D, E, F, H, I and proteolipid K(x).

It localises to the cell membrane. Component of the A-type ATP synthase that produces ATP from ADP in the presence of a proton gradient across the membrane. The protein is A-type ATP synthase subunit D of Methanosphaera stadtmanae (strain ATCC 43021 / DSM 3091 / JCM 11832 / MCB-3).